A 373-amino-acid polypeptide reads, in one-letter code: UBX domain-containing protein 1 (373 aa).

Disordered stretches follow at residues 39–179 and 236–293; these read VTEF…QIPR and IKQH…VDES. Polar residues predominate over residues 49 to 59; that stretch reads TAGSSEPTGQP. Composition is skewed to low complexity over residues 60-71 and 85-94; these read SAKSSSSTPRES and LGDLASGAAD. Residues 95-104 are compositionally biased toward acidic residues; that stretch reads SSDDDDDENQ. Residues 121 to 132 are compositionally biased toward basic and acidic residues; the sequence is DDLKKKIIEKAR. The 74-residue stretch at 185–258 folds into the SEP domain; it reads LHFWADGFSV…KYQPFAGKGQ (74 aa). Residues 292–369 form the UBX domain; it reads ESQPVVTLQI…PEFKRGGVVV (78 aa).

In terms of biological role, involved in CDC48-dependent protein degradation through the ubiquitin/proteasome pathway. The polypeptide is UBX domain-containing protein 1 (ubx1) (Emericella nidulans (strain FGSC A4 / ATCC 38163 / CBS 112.46 / NRRL 194 / M139) (Aspergillus nidulans)).